A 519-amino-acid chain; its full sequence is Putative lipase ATG15 (519 aa).

The Cytoplasmic portion of the chain corresponds to 1–5 (MYIPG). A helical; Signal-anchor for type II membrane protein membrane pass occupies residues 6-26 (PLRLSSYLLPFLSSPSPPAQS). Residues 27–519 (SPDTRTISFK…CYKWEFGEWN (493 aa)) lie on the Lumenal side of the membrane. N-linked (GlcNAc...) asparagine glycosylation is found at N48, N133, N196, N220, N302, and N309. S318 serves as the catalytic Charge relay system. N361 carries an N-linked (GlcNAc...) asparagine glycan. The interval 481–502 (RRGPKRQPGGEDPKHGGVPKPV) is disordered.

Belongs to the AB hydrolase superfamily. Lipase family. In terms of assembly, binds to both phosphatidylinositol (PI) and phosphatidylinositol 3,5-bisphosphate (PIP2).

It localises to the endosome. The protein localises to the multivesicular body membrane. The protein resides in the prevacuolar compartment membrane. It carries out the reaction a triacylglycerol + H2O = a diacylglycerol + a fatty acid + H(+). In terms of biological role, lipase which is essential for lysis of subvacuolar cytoplasm to vacuole targeted bodies and intravacuolar autophagic bodies. Involved in the lysis of intravacuolar multivesicular body (MVB) vesicles. The intravacuolar membrane disintegration by ATG15 is critical to life span extension. The protein is Putative lipase ATG15 (ATG15) of Cryptococcus neoformans var. neoformans serotype D (strain B-3501A) (Filobasidiella neoformans).